A 96-amino-acid chain; its full sequence is Protein Vpr (96 aa).

The segment at 1 to 42 (MEQAPEDQGPQREPYNEWTLELLEELKSEAVRHFPRLWLHSL) is homooligomerization. Phosphoserine; by host is present on residues serine 79, serine 94, and serine 96.

It belongs to the HIV-1 VPR protein family. In terms of assembly, homooligomer, may form homodimer. Interacts with p6-gag region of the Pr55 Gag precursor protein through a (Leu-X-X)4 motif near the C-terminus of the P6gag protein. Interacts with host UNG. May interact with host RAD23A/HHR23A. Interacts with host VPRBP/DCAF1, leading to hijack the CUL4A-RBX1-DDB1-DCAF1/VPRBP complex, mediating ubiquitination of host proteins such as TERT and ZGPAT and arrest of the cell cycle in G2 phase. Phosphorylated on several residues by host. These phosphorylations regulate VPR activity for the nuclear import of the HIV-1 pre-integration complex.

It localises to the virion. It is found in the host nucleus. Its subcellular location is the host extracellular space. In terms of biological role, during virus replication, may deplete host UNG protein, and incude G2-M cell cycle arrest. Acts by targeting specific host proteins for degradation by the 26S proteasome, through association with the cellular CUL4A-DDB1 E3 ligase complex by direct interaction with host VPRPB/DCAF-1. Cell cycle arrest reportedly occurs within hours of infection and is not blocked by antiviral agents, suggesting that it is initiated by the VPR carried into the virion. Additionally, VPR induces apoptosis in a cell cycle dependent manner suggesting that these two effects are mechanistically linked. Detected in the serum and cerebrospinal fluid of AIDS patient, VPR may also induce cell death to bystander cells. During virus entry, plays a role in the transport of the viral pre-integration (PIC) complex to the host nucleus. This function is crucial for viral infection of non-dividing macrophages. May act directly at the nuclear pore complex, by binding nucleoporins phenylalanine-glycine (FG)-repeat regions. This Human immunodeficiency virus type 1 group M subtype B (isolate RF/HAT3) (HIV-1) protein is Protein Vpr.